A 196-amino-acid polypeptide reads, in one-letter code: Small ribosomal subunit protein uS4c (196 aa).

Residues 17–36 are disordered; it reads ALPGLTRKTPKSGSNLKKKF. The region spanning 89-150 is the S4 RNA-binding domain; the sequence is MRLDNIVFRL…NQRSKRLVQN (62 aa).

This sequence belongs to the universal ribosomal protein uS4 family. Part of the 30S ribosomal subunit. Contacts protein S5. The interaction surface between S4 and S5 is involved in control of translational fidelity.

The protein localises to the plastid. It is found in the chloroplast. Functionally, one of the primary rRNA binding proteins, it binds directly to 16S rRNA where it nucleates assembly of the body of the 30S subunit. In terms of biological role, with S5 and S12 plays an important role in translational accuracy. The sequence is that of Small ribosomal subunit protein uS4c (rps4) from Tragus racemosus (Carrot grass).